Consider the following 161-residue polypeptide: uncharacterized protein (161 aa).

This is an uncharacterized protein from Escherichia coli (strain K12).